Consider the following 172-residue polypeptide: Iron-sulfur cluster assembly protein SufA (172 aa).

The N-terminal stretch at 1–19 (MFINIFLFLFAATINISSS) is a signal peptide. The [4Fe-4S] cluster site is built by C96, C164, and C166.

This sequence belongs to the HesB/IscA family. In terms of assembly, homodimer.

It is found in the plastid. Its subcellular location is the apicoplast. The protein operates within cofactor biosynthesis; iron-sulfur cluster biosynthesis. In terms of biological role, participates in the sulfur mobilization (SUF) pathway for iron-sulfur (Fe-S) cluster biogenesis. Involved in the pre-assembly of [4Fe-4S] clusters and their transfer to target proteins. The sequence is that of Iron-sulfur cluster assembly protein SufA from Plasmodium berghei (strain Anka).